A 262-amino-acid polypeptide reads, in one-letter code: Virulence plasmid protein pGP6-D-related protein (262 aa).

This sequence belongs to the UPF0137 (pGP6-D) family.

This chain is Virulence plasmid protein pGP6-D-related protein, found in Chlamydia muridarum (strain MoPn / Nigg).